The sequence spans 120 residues: ATP synthase subunit a (120 aa).

A run of 4 helical transmembrane segments spans residues 2–22, 29–49, 59–79, and 94–116; these read FFYSLFKGTYNFIYVTIYSYL, FFPFFFYLFLFICLSNLVGIV, LNITFSLSFLVWWATCLLGFY, and IPFVLVPFWALIEVISFIFRSVG.

Belongs to the ATPase A chain family. In terms of assembly, F-type ATPases have 2 components, CF(1) - the catalytic core - and CF(0) - the membrane proton channel. CF(1) has five subunits: alpha(3), beta(3), gamma(1), delta(1), epsilon(1). CF(0) has three main subunits: a, b and c.

It is found in the mitochondrion inner membrane. Mitochondrial membrane ATP synthase (F(1)F(0) ATP synthase or Complex V) produces ATP from ADP in the presence of a proton gradient across the membrane which is generated by electron transport complexes of the respiratory chain. F-type ATPases consist of two structural domains, F(1) - containing the extramembraneous catalytic core and F(0) - containing the membrane proton channel, linked together by a central stalk and a peripheral stalk. During catalysis, ATP synthesis in the catalytic domain of F(1) is coupled via a rotary mechanism of the central stalk subunits to proton translocation. Key component of the proton channel; it may play a direct role in the translocation of protons across the membrane. This chain is ATP synthase subunit a (ATP6), found in Naegleria fowleri (Brain eating amoeba).